The primary structure comprises 2126 residues: Phthioceranic/hydroxyphthioceranic acid synthase (2126 aa).

Positions 24–447 (VTPVAVIGMA…GTNVHAVVEQ (424 aa)) constitute a Ketosynthase family 3 (KS3) domain. The active-site Acyl-thioester intermediate; for beta-ketoacyl synthase activity is C196. Active-site for beta-ketoacyl synthase activity residues include H331 and H367. The tract at residues 449–549 (PQTEAQPHAA…VYQPAVGQDD (101 aa)) is linker domain (LD). Residues 550–849 (RGPVWLFSGQ…VAALAGMRRE (300 aa)) form an acyltransferase (AT) region. S641 serves as the catalytic Acyl-ester intermediate; for acyltransferase activity. The interval 909–1191 (STVAVHPLLG…LAVCGLRIGT (283 aa)) is dehydratase (DH). Residues 914–1032 (HPLLGAHVRL…RRASAVLQQV (119 aa)) form an N-terminal hotdog fold region. In terms of domain architecture, PKS/mFAS DH spans 914 to 1198 (HPLLGAHVRL…IGTGVSERDK (285 aa)). The Proton acceptor; for dehydratase activity role is filled by H947. The C-terminal hotdog fold stretch occupies residues 1051–1198 (PCRVDGEDLR…IGTGVSERDK (148 aa)). D1115 (proton donor; for dehydratase activity) is an active-site residue. Positions 1227–1398 (KWLLISDCAA…SEEDETAWRD (172 aa)) are pseudo beta-ketoacyl reductase (PsiKR). Positions 1426-1750 (SGMRLQIRTP…EHTGKLVLHI (325 aa)) are enoylreductase (ER). Residues 1772–2019 (GSYIITGGLG…AERSRFFEVF (248 aa)) form a beta-ketoacyl reductase (KR) region. NADP(+) contacts are provided by residues 1780–1783 (LGGL), 1803–1806 (SRTQ), 1831–1832 (DI), and 1904–1905 (FS). One can recognise a Carrier domain in the interval 2040–2126 (DEWPARLRQL…DAPAAALSSQ (87 aa)). S2075 bears the O-(pantetheine 4'-phosphoryl)serine mark.

It depends on pantetheine 4'-phosphate as a cofactor.

It carries out the reaction hexadecanoyl-[(hydroxy)phthioceranic acid synthase] + 7 (S)-methylmalonyl-CoA + 14 NADPH + 21 H(+) = C37-phthioceranyl-[(hydroxy)phthioceranic acid synthase] + 7 CO2 + 14 NADP(+) + 7 CoA + 7 H2O. The enzyme catalyses hexadecanoyl-[(hydroxy)phthioceranic acid synthase] + 8 (S)-methylmalonyl-CoA + 16 NADPH + 24 H(+) = C40-phthioceranyl-[(hydroxy)phthioceranic acid synthase] + 8 CO2 + 16 NADP(+) + 8 CoA + 8 H2O. The protein operates within lipid metabolism; fatty acid biosynthesis. It participates in glycolipid metabolism; sulfolipid-1 biosynthesis. Its function is as follows. Involved in sulfolipid-1 biosynthesis. Catalyzes the synthesis of the hepta- and octamethyl phthioceranic and hydroxyphthioceranic acids, the methyl-branched acyl constituents of sulfolipids. The chain is Phthioceranic/hydroxyphthioceranic acid synthase (pks2) from Mycobacterium bovis (strain ATCC BAA-935 / AF2122/97).